Here is a 274-residue protein sequence, read N- to C-terminus: NADH-ubiquinone oxidoreductase chain 2 (274 aa).

8 helical membrane passes run M28 to P48, L54 to I74, I79 to L99, L107 to E127, S128 to F148, F171 to P191, F206 to C226, and L254 to F274.

Belongs to the complex I subunit 2 family.

It localises to the mitochondrion inner membrane. It catalyses the reaction a ubiquinone + NADH + 5 H(+)(in) = a ubiquinol + NAD(+) + 4 H(+)(out). Core subunit of the mitochondrial membrane respiratory chain NADH dehydrogenase (Complex I) that is believed to belong to the minimal assembly required for catalysis. Complex I functions in the transfer of electrons from NADH to the respiratory chain. The immediate electron acceptor for the enzyme is believed to be ubiquinone. The chain is NADH-ubiquinone oxidoreductase chain 2 (mt:ND2) from Drosophila mauritiana (Fruit fly).